The primary structure comprises 128 residues: Small nuclear ribonucleoprotein SmD3a (128 aa).

Positions 7–79 (IPVKLLHESS…VRFLVIPDML (73 aa)) constitute a Sm domain. The disordered stretch occupies residues 90 to 128 (GKGKSASLGVGRGRGAAMRAKGTGRGTGGGRGAVPPVRR). Gly residues predominate over residues 112 to 121 (TGRGTGGGRG).

This sequence belongs to the snRNP core protein family. As to expression, expressed in young seedlings, roots, leaves, flowers and immature siliques.

It is found in the cytoplasm. It localises to the cytosol. The protein resides in the nucleus. Its function is as follows. Core component of the spliceosomal U1, U2, U4 and U5 small nuclear ribonucleoproteins (snRNPs), the building blocks of the spliceosome. May play a minor role in the splicing of cellular pre-mRNAs. This chain is Small nuclear ribonucleoprotein SmD3a, found in Arabidopsis thaliana (Mouse-ear cress).